The chain runs to 131 residues: Large ribosomal subunit protein bL12 (131 aa).

A compositionally biased stretch (basic and acidic residues) spans 99–125 (ESTPKPIKEGTNKDDAEETKKKLEEAG). The tract at residues 99–131 (ESTPKPIKEGTNKDDAEETKKKLEEAGAKVTVK) is disordered.

It belongs to the bacterial ribosomal protein bL12 family. Homodimer. Part of the ribosomal stalk of the 50S ribosomal subunit. Forms a multimeric L10(L12)X complex, where L10 forms an elongated spine to which 2 to 4 L12 dimers bind in a sequential fashion. Binds GTP-bound translation factors.

Forms part of the ribosomal stalk which helps the ribosome interact with GTP-bound translation factors. Is thus essential for accurate translation. The protein is Large ribosomal subunit protein bL12 of Gloeothece citriformis (strain PCC 7424) (Cyanothece sp. (strain PCC 7424)).